The chain runs to 409 residues: Protein a6 (409 aa).

Ser-86 is subject to Phosphoserine. Residues 106-120 (RAHRTGRRQAPRRAA) are compositionally biased toward basic residues. The segment at 106–165 (RAHRTGRRQAPRRAATHSYPVTDSILITSDDEHNEQEPSSTARVRSQLSMRSPPPLAPLT) is disordered. A Phosphothreonine modification is found at Thr-133. Ser-134 is modified (phosphoserine). The span at 142-155 (EPSSTARVRSQLSM) shows a compositional bias: polar residues.

In Drosophila melanogaster (Fruit fly), this protein is Protein a6 (a6).